The primary structure comprises 585 residues: DNA ligase (585 aa).

Residue Glu-278 coordinates ATP. Lys-280 serves as the catalytic N6-AMP-lysine intermediate. Residues Arg-285, Arg-301, Glu-330, Phe-370, Arg-444, and Lys-450 each coordinate ATP.

Belongs to the ATP-dependent DNA ligase family. It depends on Mg(2+) as a cofactor.

The enzyme catalyses ATP + (deoxyribonucleotide)n-3'-hydroxyl + 5'-phospho-(deoxyribonucleotide)m = (deoxyribonucleotide)n+m + AMP + diphosphate.. Its function is as follows. DNA ligase that seals nicks in double-stranded DNA during DNA replication, DNA recombination and DNA repair. The sequence is that of DNA ligase from Haloferax volcanii (strain ATCC 29605 / DSM 3757 / JCM 8879 / NBRC 14742 / NCIMB 2012 / VKM B-1768 / DS2) (Halobacterium volcanii).